A 313-amino-acid chain; its full sequence is Intelectin-1b (313 aa).

Positions 1–19 are cleaved as a signal peptide; the sequence is MTQLGFLLFIMIATRVCSA. Positions 32-251 constitute a Fibrinogen C-terminal domain; that stretch reads SFFSSLPRSC…NNERAASALC (220 aa). Residues cysteine 41 and cysteine 70 are joined by a disulfide bond. Ca(2+) is bound by residues histidine 86, glutamate 87, asparagine 89, glycine 92, glycine 97, aspartate 98, and aspartate 133. 3 disulfides stabilise this stretch: cysteine 94-cysteine 280, cysteine 199-cysteine 259, and cysteine 251-cysteine 265. Asparagine 163 carries N-linked (GlcNAc...) asparagine glycosylation. Ca(2+) is bound by residues asparagine 260, glutamate 262, glutamate 274, and aspartate 282. Residues 262–263 and glutamate 274 each bind a carbohydrate; that span reads EH. A lipid anchor (GPI-anchor amidated serine) is attached at serine 298. Residues 299–313 constitute a propeptide that is removed on maturation; that stretch reads NSREITEAAVLLFYR.

Expressed in the globlet and Paneth cells of the small intestine of infected mice. Expressed in the ileum of uninfected mice.

The protein localises to the cell membrane. The protein resides in the secreted. Its function is as follows. May play a protective role in the innate immune response to parasite infection. In Mus musculus (Mouse), this protein is Intelectin-1b (Itln1b).